A 92-amino-acid polypeptide reads, in one-letter code: Small ribosomal subunit protein uS19 (92 aa).

Belongs to the universal ribosomal protein uS19 family.

Functionally, protein S19 forms a complex with S13 that binds strongly to the 16S ribosomal RNA. The sequence is that of Small ribosomal subunit protein uS19 from Oceanobacillus iheyensis (strain DSM 14371 / CIP 107618 / JCM 11309 / KCTC 3954 / HTE831).